Here is a 429-residue protein sequence, read N- to C-terminus: Carboxypeptidase B (429 aa).

The first 15 residues, 1–15, serve as a signal peptide directing secretion; the sequence is MKFLLVLALCAVVYA. One can recognise a Peptidase M14 domain in the interval 121-423; sequence NYQELEVIDE…EGIVVGARRA (303 aa). Residues histidine 182 and glutamate 185 each coordinate Zn(2+). Substrate is bound by residues 182-185, arginine 236, and 256-257; these read HARE and NR. Cysteine 250 and cysteine 273 are oxidised to a cystine. Histidine 309 contacts Zn(2+). Substrate is bound by residues 310–311 and tyrosine 365; that span reads SF. Glutamate 387 acts as the Proton donor/acceptor in catalysis.

The protein belongs to the peptidase M14 family. It depends on Zn(2+) as a cofactor.

The protein localises to the secreted. The enzyme catalyses Preferential release of a C-terminal lysine or arginine amino acid.. Highly resistant to inhibition by potato carboxypeptidase inhibitor (PCI). Moderately inhibited by leech carboxypeptidase inhibitor (LCI) and tick carboxypeptidase inhibitor (TCI). Metalloprotease which cleaves a single amino acid from the C-terminal end of polypeptide chains. Shows a strong preference for peptides with a terminal lysine residue. In Helicoverpa zea (Corn earworm moth), this protein is Carboxypeptidase B.